Consider the following 212-residue polypeptide: Uracil phosphoribosyltransferase (212 aa).

5-phospho-alpha-D-ribose 1-diphosphate is bound by residues R78, R103, and D130–S138. Residues I193 and G198–A200 contribute to the uracil site. Residue D199 coordinates 5-phospho-alpha-D-ribose 1-diphosphate.

Belongs to the UPRTase family. Mg(2+) serves as cofactor.

It carries out the reaction UMP + diphosphate = 5-phospho-alpha-D-ribose 1-diphosphate + uracil. Its pathway is pyrimidine metabolism; UMP biosynthesis via salvage pathway; UMP from uracil: step 1/1. With respect to regulation, allosterically activated by GTP. In terms of biological role, catalyzes the conversion of uracil and 5-phospho-alpha-D-ribose 1-diphosphate (PRPP) to UMP and diphosphate. This is Uracil phosphoribosyltransferase from Pseudomonas aeruginosa (strain LESB58).